The sequence spans 185 residues: Pyridoxal 5'-phosphate synthase subunit PdxT (185 aa).

46–48 (GES) contributes to the L-glutamine binding site. Cysteine 75 serves as the catalytic Nucleophile. L-glutamine contacts are provided by residues arginine 101 and 129–130 (IR). Residues histidine 165 and glutamate 167 each act as charge relay system in the active site.

This sequence belongs to the glutaminase PdxT/SNO family. As to quaternary structure, in the presence of PdxS, forms a dodecamer of heterodimers. Only shows activity in the heterodimer.

It catalyses the reaction aldehydo-D-ribose 5-phosphate + D-glyceraldehyde 3-phosphate + L-glutamine = pyridoxal 5'-phosphate + L-glutamate + phosphate + 3 H2O + H(+). It carries out the reaction L-glutamine + H2O = L-glutamate + NH4(+). The protein operates within cofactor biosynthesis; pyridoxal 5'-phosphate biosynthesis. Catalyzes the hydrolysis of glutamine to glutamate and ammonia as part of the biosynthesis of pyridoxal 5'-phosphate. The resulting ammonia molecule is channeled to the active site of PdxS. The sequence is that of Pyridoxal 5'-phosphate synthase subunit PdxT from Staphylococcus epidermidis (strain ATCC 12228 / FDA PCI 1200).